The chain runs to 552 residues: Protein TRM32 (552 aa).

Residues Thr295 to Leu379 are disordered. Residues Val331–Leu351 show a composition bias toward basic and acidic residues. The span at Asp352–Lys371 shows a compositional bias: polar residues.

This Arabidopsis thaliana (Mouse-ear cress) protein is Protein TRM32 (TRM32).